We begin with the raw amino-acid sequence, 330 residues long: HPr kinase/phosphorylase (330 aa).

Active-site residues include H153 and K174. 168-175 (GKSGLGKS) lines the ATP pocket. Residue S175 coordinates Mg(2+). The active-site Proton acceptor; for phosphorylation activity. Proton donor; for dephosphorylation activity is the D192. The important for the catalytic mechanism of both phosphorylation and dephosphorylation stretch occupies residues 217–226 (MEIRGLGVVD). E218 provides a ligand contact to Mg(2+). R259 is an active-site residue. The important for the catalytic mechanism of dephosphorylation stretch occupies residues 280-285 (PIFPGK).

This sequence belongs to the HPrK/P family. As to quaternary structure, homohexamer. Requires Mg(2+) as cofactor.

The catalysed reaction is [HPr protein]-L-serine + ATP = [HPr protein]-O-phospho-L-serine + ADP + H(+). It carries out the reaction [HPr protein]-O-phospho-L-serine + phosphate + H(+) = [HPr protein]-L-serine + diphosphate. Catalyzes the ATP- as well as the pyrophosphate-dependent phosphorylation of a specific serine residue in HPr, a phosphocarrier protein of the phosphoenolpyruvate-dependent sugar phosphotransferase system (PTS). HprK/P also catalyzes the pyrophosphate-producing, inorganic phosphate-dependent dephosphorylation (phosphorolysis) of seryl-phosphorylated HPr (P-Ser-HPr). The sequence is that of HPr kinase/phosphorylase from Chlorobium limicola (strain DSM 245 / NBRC 103803 / 6330).